A 246-amino-acid chain; its full sequence is Peroxisomal membrane protein 11A (246 aa).

The Cytoplasmic segment spans residues 1 to 93 (MDAFIRVANQ…LCLTLANLNR (93 aa)). The helical transmembrane segment at 94–114 (VVYYICDTVLWAKSVGLTSGI) threads the bilayer. Residues 115 to 217 (NREKWQMRAA…LNQLGIYKSN (103 aa)) are Lumenal-facing. A helical transmembrane segment spans residues 218-238 (LGVVGFGGLVSSVAGLITVVY). Residues 218-238 (LGVVGFGGLVSSVAGLITVVY) are required for homodimerization, interaction with PEX11G, and peroxisomal localization. Over 239–246 (PQLKLKAR) the chain is Cytoplasmic.

The protein belongs to the peroxin-11 family. Homodimer. Heterodimer with PEX11G. Probably interacts with COPB2 and COPA. Interacts with PEX19. Interacts with FIS1. As to expression, expressed at high levels in kidney, liver, lung, brain, and testis and at low levels in heart, spleen and skeletal muscle.

The protein resides in the peroxisome membrane. Its function is as follows. May be involved in peroxisomal proliferation and may regulate peroxisomes division. May mediate binding of coatomer proteins to the peroxisomal membrane. Promotes membrane protrusion and elongation on the peroxisomal surface. This is Peroxisomal membrane protein 11A (Pex11a) from Rattus norvegicus (Rat).